The following is a 531-amino-acid chain: MSNPTLAAEVGRRRTFAIISHPDAGKTTLTEKLLLYGGAIDMAGSVRARRNQRHATSDWMAMEQQRGISITSTVLQFVYRDCQINLLDTPGHQDFSEDTYRTLAAADNAAMLIDAAKGIEAQTRKLFDVCRMRGIPIFTFINKLDRPGREPLELLDEIEKVLGIDVYPVNWPIGMGDTFRGVFDRLEHTVHLFDRTTGGKKMAPVTVGAIGDERMRVLMDEGTYAQIVEEIELLDGVGVPFDIERVAQGKLTPVFFGSAANNFGVQLFLDAFIRFASRPGTRSANTGVISPVAEDFSGFVFKIQANMDPQHRDRVAFIRVCSGKFEKDMTVHHTRSGKKVRLSRSLKLFGQERETVEEAYAGDIVGVINPGTFAIGDTICLGKPLAFEGIPLFPPEHFATLRNPNPSKYKQFLKGVTQLREEGAVQVLFHQDEAKRDPILAAVGQLQFDVVRFRLESEYHVETILEPLPWTLARWITAKQLEDLETIDWYFDSLGLKDHEGRLVILFKTPWGFQQMSERNPHLQFHEIAPL.

The 270-residue stretch at 11 to 280 folds into the tr-type G domain; sequence GRRRTFAIIS…AFIRFASRPG (270 aa). GTP contacts are provided by residues 20-27, 88-92, and 142-145; these read SHPDAGKT, DTPGH, and NKLD.

The protein belongs to the TRAFAC class translation factor GTPase superfamily. Classic translation factor GTPase family. PrfC subfamily.

Its subcellular location is the cytoplasm. In terms of biological role, increases the formation of ribosomal termination complexes and stimulates activities of RF-1 and RF-2. It binds guanine nucleotides and has strong preference for UGA stop codons. It may interact directly with the ribosome. The stimulation of RF-1 and RF-2 is significantly reduced by GTP and GDP, but not by GMP. The sequence is that of Peptide chain release factor 3 from Gloeobacter violaceus (strain ATCC 29082 / PCC 7421).